The following is a 469-amino-acid chain: Uronate isomerase (469 aa).

Belongs to the metallo-dependent hydrolases superfamily. Uronate isomerase family.

It carries out the reaction D-glucuronate = D-fructuronate. The enzyme catalyses aldehydo-D-galacturonate = keto-D-tagaturonate. It functions in the pathway carbohydrate metabolism; pentose and glucuronate interconversion. This is Uronate isomerase from Rhizobium meliloti (strain 1021) (Ensifer meliloti).